Consider the following 376-residue polypeptide: Queuine tRNA-ribosyltransferase (376 aa).

The active-site Proton acceptor is aspartate 90. Substrate is bound by residues aspartate 90–phenylalanine 94, aspartate 144, glutamine 193, and glycine 220. The interval glycine 251–aspartate 257 is RNA binding. Aspartate 270 functions as the Nucleophile in the catalytic mechanism. The segment at threonine 275–arginine 279 is RNA binding; important for wobble base 34 recognition. Cysteine 308, cysteine 310, cysteine 313, and histidine 339 together coordinate Zn(2+).

Belongs to the queuine tRNA-ribosyltransferase family. As to quaternary structure, homodimer. Within each dimer, one monomer is responsible for RNA recognition and catalysis, while the other monomer binds to the replacement base PreQ1. The cofactor is Zn(2+).

It carries out the reaction 7-aminomethyl-7-carbaguanine + guanosine(34) in tRNA = 7-aminomethyl-7-carbaguanosine(34) in tRNA + guanine. It functions in the pathway tRNA modification; tRNA-queuosine biosynthesis. Catalyzes the base-exchange of a guanine (G) residue with the queuine precursor 7-aminomethyl-7-deazaguanine (PreQ1) at position 34 (anticodon wobble position) in tRNAs with GU(N) anticodons (tRNA-Asp, -Asn, -His and -Tyr). Catalysis occurs through a double-displacement mechanism. The nucleophile active site attacks the C1' of nucleotide 34 to detach the guanine base from the RNA, forming a covalent enzyme-RNA intermediate. The proton acceptor active site deprotonates the incoming PreQ1, allowing a nucleophilic attack on the C1' of the ribose to form the product. After dissociation, two additional enzymatic reactions on the tRNA convert PreQ1 to queuine (Q), resulting in the hypermodified nucleoside queuosine (7-(((4,5-cis-dihydroxy-2-cyclopenten-1-yl)amino)methyl)-7-deazaguanosine). The protein is Queuine tRNA-ribosyltransferase of Cupriavidus metallidurans (strain ATCC 43123 / DSM 2839 / NBRC 102507 / CH34) (Ralstonia metallidurans).